Consider the following 422-residue polypeptide: SH2 domain-containing protein 4A (422 aa).

Residues serine 117 and serine 123 each carry the phosphoserine modification. Disordered stretches follow at residues proline 141–lysine 190 and serine 202–threonine 282. Basic and acidic residues-rich tracts occupy residues threonine 163–lysine 190 and lysine 212–arginine 231. Serine 233 carries the post-translational modification Phosphoserine. Residues tryptophan 316–cysteine 408 enclose the SH2 domain.

As to quaternary structure, interacts with ESR1.

Its subcellular location is the cytoplasm. Functionally, inhibits estrogen-induced cell proliferation by competing with PLCG for binding to ESR1, blocking the effect of estrogen on PLCG and repressing estrogen-induced proliferation. May play a role in T-cell development and function. The chain is SH2 domain-containing protein 4A (Sh2d4a) from Rattus norvegicus (Rat).